A 451-amino-acid polypeptide reads, in one-letter code: Glycylpeptide N-tetradecanoyltransferase (451 aa).

Tetradecanoyl-CoA-binding positions include 34-37 (YKFW), 167-169 (LCV), and 175-179 (SKRLT). Catalysis depends on Leu451, which acts as the Proton acceptor; via carboxylate.

The protein belongs to the NMT family. In terms of assembly, monomer.

It localises to the cytoplasm. The catalysed reaction is N-terminal glycyl-[protein] + tetradecanoyl-CoA = N-tetradecanoylglycyl-[protein] + CoA + H(+). Adds a myristoyl group to the N-terminal glycine residue of certain cellular proteins. The sequence is that of Glycylpeptide N-tetradecanoyltransferase (NMT1) from Candida glabrata (strain ATCC 2001 / BCRC 20586 / JCM 3761 / NBRC 0622 / NRRL Y-65 / CBS 138) (Yeast).